The primary structure comprises 283 residues: 4-diphosphocytidyl-2-C-methyl-D-erythritol kinase (283 aa).

The active site involves lysine 13. Position 96-106 (96-106 (PMGGGIGGGSS)) interacts with ATP. Aspartate 138 is an active-site residue.

This sequence belongs to the GHMP kinase family. IspE subfamily.

The catalysed reaction is 4-CDP-2-C-methyl-D-erythritol + ATP = 4-CDP-2-C-methyl-D-erythritol 2-phosphate + ADP + H(+). It functions in the pathway isoprenoid biosynthesis; isopentenyl diphosphate biosynthesis via DXP pathway; isopentenyl diphosphate from 1-deoxy-D-xylulose 5-phosphate: step 3/6. Functionally, catalyzes the phosphorylation of the position 2 hydroxy group of 4-diphosphocytidyl-2C-methyl-D-erythritol. The polypeptide is 4-diphosphocytidyl-2-C-methyl-D-erythritol kinase (Pseudomonas fluorescens (strain SBW25)).